The chain runs to 546 residues: Chaperonin GroEL (546 aa).

ATP contacts are provided by residues 29–32 (TLGP), Lys50, 86–90 (DGTTT), Gly414, and Asp495. The interval 526 to 546 (AKEGAPAGGGMPDMGGMGGMM) is disordered. The span at 531–546 (PAGGGMPDMGGMGGMM) shows a compositional bias: gly residues.

It belongs to the chaperonin (HSP60) family. Forms a cylinder of 14 subunits composed of two heptameric rings stacked back-to-back. Interacts with the co-chaperonin GroES.

It is found in the cytoplasm. It carries out the reaction ATP + H2O + a folded polypeptide = ADP + phosphate + an unfolded polypeptide.. In terms of biological role, together with its co-chaperonin GroES, plays an essential role in assisting protein folding. The GroEL-GroES system forms a nano-cage that allows encapsulation of the non-native substrate proteins and provides a physical environment optimized to promote and accelerate protein folding. This is Chaperonin GroEL from Jannaschia sp. (strain CCS1).